The sequence spans 117 residues: Ribonuclease P protein component (117 aa).

This sequence belongs to the RnpA family. In terms of assembly, consists of a catalytic RNA component (M1 or rnpB) and a protein subunit.

It carries out the reaction Endonucleolytic cleavage of RNA, removing 5'-extranucleotides from tRNA precursor.. RNaseP catalyzes the removal of the 5'-leader sequence from pre-tRNA to produce the mature 5'-terminus. It can also cleave other RNA substrates such as 4.5S RNA. The protein component plays an auxiliary but essential role in vivo by binding to the 5'-leader sequence and broadening the substrate specificity of the ribozyme. The chain is Ribonuclease P protein component from Lactococcus lactis subsp. lactis (strain IL1403) (Streptococcus lactis).